The following is a 378-amino-acid chain: Anhydro-N-acetylmuramic acid kinase (378 aa).

23–30 contacts ATP; it reads GTSMDGAD.

The protein belongs to the anhydro-N-acetylmuramic acid kinase family.

It carries out the reaction 1,6-anhydro-N-acetyl-beta-muramate + ATP + H2O = N-acetyl-D-muramate 6-phosphate + ADP + H(+). Its pathway is amino-sugar metabolism; 1,6-anhydro-N-acetylmuramate degradation. It participates in cell wall biogenesis; peptidoglycan recycling. Catalyzes the specific phosphorylation of 1,6-anhydro-N-acetylmuramic acid (anhMurNAc) with the simultaneous cleavage of the 1,6-anhydro ring, generating MurNAc-6-P. Is required for the utilization of anhMurNAc either imported from the medium or derived from its own cell wall murein, and thus plays a role in cell wall recycling. In Bordetella bronchiseptica (strain ATCC BAA-588 / NCTC 13252 / RB50) (Alcaligenes bronchisepticus), this protein is Anhydro-N-acetylmuramic acid kinase.